The primary structure comprises 170 residues: ATP synthase subunit b (170 aa).

A helical transmembrane segment spans residues 5 to 25; the sequence is YFIPCLLLPTMMLASGGGGET.

It belongs to the ATPase B chain family. F-type ATPases have 2 components, F(1) - the catalytic core - and F(0) - the membrane proton channel. F(1) has five subunits: alpha(3), beta(3), gamma(1), delta(1), epsilon(1). F(0) has three main subunits: a(1), b(2) and c(10-14). The alpha and beta chains form an alternating ring which encloses part of the gamma chain. F(1) is attached to F(0) by a central stalk formed by the gamma and epsilon chains, while a peripheral stalk is formed by the delta and b chains.

The protein resides in the cell inner membrane. F(1)F(0) ATP synthase produces ATP from ADP in the presence of a proton or sodium gradient. F-type ATPases consist of two structural domains, F(1) containing the extramembraneous catalytic core and F(0) containing the membrane proton channel, linked together by a central stalk and a peripheral stalk. During catalysis, ATP synthesis in the catalytic domain of F(1) is coupled via a rotary mechanism of the central stalk subunits to proton translocation. Its function is as follows. Component of the F(0) channel, it forms part of the peripheral stalk, linking F(1) to F(0). This chain is ATP synthase subunit b, found in Wolinella succinogenes (strain ATCC 29543 / DSM 1740 / CCUG 13145 / JCM 31913 / LMG 7466 / NCTC 11488 / FDC 602W) (Vibrio succinogenes).